A 433-amino-acid chain; its full sequence is Adenylosuccinate synthetase (433 aa).

GTP-binding positions include 11–17 (GDEGKGK) and 39–41 (GHT). Aspartate 12 functions as the Proton acceptor in the catalytic mechanism. Mg(2+) contacts are provided by aspartate 12 and glycine 39. IMP-binding positions include 12–15 (DEGK), 37–40 (NAGH), threonine 134, arginine 148, asparagine 230, threonine 245, and arginine 309. Histidine 40 serves as the catalytic Proton donor. Substrate is bound at residue 305–311 (VTTGRKR). GTP contacts are provided by residues arginine 311, 337 to 339 (KLD), and 419 to 421 (GTG).

The protein belongs to the adenylosuccinate synthetase family. As to quaternary structure, homodimer. Mg(2+) is required as a cofactor.

Its subcellular location is the cytoplasm. It catalyses the reaction IMP + L-aspartate + GTP = N(6)-(1,2-dicarboxyethyl)-AMP + GDP + phosphate + 2 H(+). Its pathway is purine metabolism; AMP biosynthesis via de novo pathway; AMP from IMP: step 1/2. Plays an important role in the de novo pathway and in the salvage pathway of purine nucleotide biosynthesis. Catalyzes the first committed step in the biosynthesis of AMP from IMP. This is Adenylosuccinate synthetase from Saccharomyces cerevisiae (strain JAY291) (Baker's yeast).